Reading from the N-terminus, the 304-residue chain is Non-specific ribonucleoside hydrolase RihC (304 aa).

His-233 is a catalytic residue.

The protein belongs to the IUNH family. RihC subfamily.

Hydrolyzes both purine and pyrimidine ribonucleosides with a broad-substrate specificity. In Escherichia coli O17:K52:H18 (strain UMN026 / ExPEC), this protein is Non-specific ribonucleoside hydrolase RihC.